Consider the following 130-residue polypeptide: Movement protein TGB2 (130 aa).

Topologically, residues 1 to 12 (MPGLTPPVNYEQ) are cytoplasmic. Residues 13–30 (VYKVLAIGFLLCASIYCL) form a helical membrane-spanning segment. The Lumenal segment spans residues 31–72 (RSNHLPHVGDNIHSLPHGGNYADGTKRVQYFRPHSSTSTNHK). Residues 73-90 (YTALCAVLTLSLLIFAQT) traverse the membrane as a helical segment. Topologically, residues 91 to 130 (RLAAGNRITSVSICHHCSSQGSLSGGNHGRVSGHSELPTT) are cytoplasmic. The interval 110 to 130 (QGSLSGGNHGRVSGHSELPTT) is disordered.

It belongs to the Tymovirales TGBp2 protein family.

It is found in the host endoplasmic reticulum membrane. Plays a role in viral cell-to-cell propagation, by facilitating genome transport to neighboring plant cells through plasmosdesmata,. This chain is Movement protein TGB2, found in Narcissus pseudonarcissus (Daffodil).